Reading from the N-terminus, the 1134-residue chain is Protocadherin 18 (1134 aa).

An N-terminal signal peptide occupies residues 1–27; that stretch reads MHQMNTKMHFRFALALLMAFFSHDVLA. Cadherin domains lie at 28 to 137, 138 to 246, 247 to 354, 361 to 465, 466 to 576, and 582 to 688; these read KNLK…SPQF, SRPV…SPAF, EQPS…KPEI, PGKE…PPRF, QRSR…VPVV, and HNNT…STAM. Topologically, residues 28–699 are extracellular; the sequence is KNLKYRIYEE…SVSRASLDVS (672 aa). Asparagine 103 is a glycosylation site (N-linked (GlcNAc...) asparagine). N-linked (GlcNAc...) asparagine glycosylation is present at asparagine 269. N-linked (GlcNAc...) asparagine glycosylation is present at asparagine 559. A helical transmembrane segment spans residues 700–720; sequence MIIIISLGAICAVLLVIMVLF. Over 721–1134 the chain is Cytoplasmic; that stretch reads ATRCNREKKD…NKLLQDVRQS (414 aa). Disordered stretches follow at residues 769-800, 868-888, 941-1004, and 1022-1083; these read LPIRSHHRSSPSSSPTLERGQMGSRQSHNSHQ, SLKDSGRGDSEAGDSDYDLGR, DYRS…SSLL, and FSEC…PSSK. A compositionally biased stretch (polar residues) spans 791 to 800; it reads GSRQSHNSHQ. Residues 868–877 show a composition bias toward basic and acidic residues; that stretch reads SLKDSGRGDS. An interaction with DAB1 region spans residues 892–1134; it reads IDRLLGEGFS…NKLLQDVRQS (243 aa). Residues 1027–1038 are compositionally biased toward basic and acidic residues; sequence EGDRSNSLERRK. Polar residues predominate over residues 1059 to 1082; the sequence is THFQNPTSSSGTPLGTHSSVQPSS.

As to quaternary structure, interacts with DAB1. As to expression, predominantly expressed in kidney and lung.

It is found in the cell membrane. Potential calcium-dependent cell-adhesion protein. The polypeptide is Protocadherin 18 (Pcdh18) (Mus musculus (Mouse)).